We begin with the raw amino-acid sequence, 575 residues long: MIVKVFDYIYISNVYNANDIYELIKLNIGGVLTCFDCTCIEWCHHNDTNVTNKIFYKDIFVNTKKDLIKCDVPIITNKSVNSDIIGGTHQINNYYNEQNNNYHDNTYKEFTQTHKTNIDPSQIKSDHINEERKEHYDYIIFPSDIINNTQCNNNNLKDYIKSMLILKEDAYIDFDVIHMDQLKNKHNNNNNNNNNNNNNNNNNNNNNNCCTFKNPDISNTSQHHVEHIQIHKSNSHSNIPSDNINFCNKKYDKNLSRSVEISEKDKHPENSLLYEFVNKDKLNYKINQEEDTVSSEKNKLCDNNNNNNMVHTRHIYNVCELNKCLRENKLIPYNNIYKMKHLYLNILDTFDENILKHVNKAHLFIDSVIQKKKNILIHCMAGISRCSSIILSYVSKKNKKGIEYNFNLLKSKYPFAHPNENFYRQLLLYEKMNYTLDGCTDYHNIYKKIKMNRENLEELKILNLKNDKQPIYNFRCKHCNYVLFNDNEIIKHDFKISKIKKNYGNSCTSIFIEKKEWILTENKMKGVLNCPNVNCNIKLGKWSWTGICCSCGYLQIPAFMINSSNVDRMNISKTV.

Residues Lys185 to Lys213 form a disordered region. A compositionally biased stretch (low complexity) spans Asn187–Asn208. Residues Asn283–Thr435 enclose the Tyrosine-protein phosphatase domain. Cys379 functions as the Phosphocysteine intermediate in the catalytic mechanism. 2 residues coordinate Zn(2+): Cys476 and Cys530.

The protein belongs to the protein-tyrosine phosphatase family. Non-receptor class dual specificity subfamily. In terms of assembly, interacts with PES. Zn(2+) serves as cofactor.

It localises to the cytoplasm. The protein localises to the nucleus. The enzyme catalyses O-phospho-L-tyrosyl-[protein] + H2O = L-tyrosyl-[protein] + phosphate. It carries out the reaction O-phospho-L-seryl-[protein] + H2O = L-seryl-[protein] + phosphate. Functionally, dual specificity protein phosphatase which dephosphorylates both phosphotyrosine and phosphoserine residues. In Plasmodium falciparum (isolate 3D7), this protein is Dual specificity protein phosphatase YVH1.